Reading from the N-terminus, the 261-residue chain is Membrane protein insertase MisCA (261 aa).

A signal peptide spans 1-22 (MLLKRRIGLLLSMVGVFMLLAG). Residue Cys-23 is the site of N-palmitoyl cysteine attachment. Cys-23 carries S-diacylglycerol cysteine lipidation. The next 5 helical transmembrane spans lie at 61–81 (YGLSIILVTILIRLLILPLMI), 131–151 (LAGCFPILIQMPILIGFYHAI), 174–194 (YILPIVAGVATFVQQKLMMAG), 204–224 (MMLWIMPIMIIVFAINFPAAL), and 225–245 (SLYWVVGNLFMIAQTFLIKGP).

It belongs to the OXA1/ALB3/YidC family. Type 2 subfamily. Mostly monomeric, it may also form dimers. Interacts with SpoIIIAE. Forms a complex with the F(1)F(0) ATP synthase in which can be found the alpha, beta, gamma, delta and epsilon subunits of F(1) and a, b and subunits of F(0). YqgA is found in the same complex.

The protein resides in the cell membrane. Required for the insertion and/or proper folding and/or complex formation of integral membrane proteins into the membrane. Involved in integration of membrane proteins that insert both dependently and independently of the Sec translocase complex, as well as at least some lipoproteins. Also involved in protein secretion processes. Essential for sporulation by activating sigma factor SpoIIIG/SigG after engulfment is completed in the prespore, maybe by acting on SpoIIIAE. It has an overlapping, although partly distinct, function compared to YqjG(MisCB). The protein is Membrane protein insertase MisCA (misCA) of Bacillus subtilis (strain 168).